Reading from the N-terminus, the 286-residue chain is Aquaporin PIP2-4 (286 aa).

The next 2 helical transmembrane spans lie at 40 to 60 (ALIA…ATVI) and 77 to 97 (CGGV…FILV). An NPA 1 motif is present at residues 109 to 111 (NPA). 3 helical membrane-spanning segments follow: residues 128-148 (LLYM…VKGF), 170-190 (GTGL…VFSA), and 204-224 (VLAP…TIPI). The NPA 2 signature appears at 230 to 232 (NPA). Residues 252–272 (IFWVGPFIGAAIAALYHQVIL) traverse the membrane as a helical segment.

Belongs to the MIP/aquaporin (TC 1.A.8) family. PIP (TC 1.A.8.11) subfamily. In terms of tissue distribution, expressed in roots.

Its subcellular location is the cell membrane. Functionally, water channel required to facilitate the transport of water across cell membrane. May play a role in root water uptake. The protein is Aquaporin PIP2-4 (PIP2-4) of Oryza sativa subsp. japonica (Rice).